The sequence spans 1150 residues: Pesticidal crystal protein Cry9Ea (1150 aa).

The protein belongs to the delta endotoxin family.

Its function is as follows. Promotes colloidosmotic lysis by binding to the midgut epithelial cells of insects. This is Pesticidal crystal protein Cry9Ea (cry9Ea) from Bacillus thuringiensis subsp. aizawai.